A 223-amino-acid chain; its full sequence is MLLVVGLGNPGKEYAAHRHNVGFMAIDALADEVRADPFREKFSGVHARAEIAGQQAILLKPMTYMNESGRSVQPAMAFFKVAPSELIVLHDELDLPFGTVRLKVGGGHAGHNGLRSIISHGGTGNFGRVRLGVGRPPAGFRGEVADYVLSGFDAVERASLPDCLKQAVQSVLEVAARGFEAAMNVRNTRPKPGKRQKGEGDGSTDPAPAAKEGKGPLPPTQKP.

Y14 contributes to the tRNA binding site. H19 functions as the Proton acceptor in the catalytic mechanism. Residues Y64, N66, and N112 each coordinate tRNA. The segment at 183 to 223 (MNVRNTRPKPGKRQKGEGDGSTDPAPAAKEGKGPLPPTQKP) is disordered.

Belongs to the PTH family. Monomer.

It localises to the cytoplasm. It carries out the reaction an N-acyl-L-alpha-aminoacyl-tRNA + H2O = an N-acyl-L-amino acid + a tRNA + H(+). Its function is as follows. Hydrolyzes ribosome-free peptidyl-tRNAs (with 1 or more amino acids incorporated), which drop off the ribosome during protein synthesis, or as a result of ribosome stalling. In terms of biological role, catalyzes the release of premature peptidyl moieties from peptidyl-tRNA molecules trapped in stalled 50S ribosomal subunits, and thus maintains levels of free tRNAs and 50S ribosomes. The protein is Peptidyl-tRNA hydrolase of Sorangium cellulosum (strain So ce56) (Polyangium cellulosum (strain So ce56)).